We begin with the raw amino-acid sequence, 1220 residues long: Polycomb protein Sfmbt (1220 aa).

The segment at 322–357 (PIQKDGMAVCKRCGAIGVKHTFYTKSRRFCSMACAR) adopts an FCS-type zinc-finger fold. Zn(2+)-binding residues include Cys-331, Cys-334, Cys-351, and Cys-355. Disordered stretches follow at residues 371-399 (GDQA…QSQS) and 464-483 (DATA…SYLS). Positions 473–482 (EGASTPNSYL) are enriched in polar residues. 4 MBT repeats span residues 536 to 647 (YDWL…LIPP), 655 to 753 (KDWK…LAAP), 761 to 871 (LAGR…VTPP), and 879 to 975 (FTWE…LEGP). Disordered stretches follow at residues 976 to 1024 (PRVA…IALK) and 1050 to 1092 (NNQP…AGSG). The segment covering 991–1000 (KIQRKRKPKK) has biased composition (basic residues). Positions 1052-1068 (QPEEEGDEEDPDADGDG) are enriched in acidic residues. Polar residues predominate over residues 1071–1082 (STSHISEQSTTQ). The span at 1083 to 1092 (SSSDLIAGSG) shows a compositional bias: low complexity. An SAM domain is found at 1140 to 1203 (WNVYDVSQFL…SDLIAQLKCK (64 aa)).

Interacts with pho as a component of the pho-repressive complex (PhoRC).

The protein resides in the nucleus. In terms of biological role, polycomb group (PcG) protein that binds to the Polycomb response elements (PREs) found in the regulatory regions of many genes. PcG proteins act by forming multiprotein complexes, which are required to maintain the transcriptionally repressive state of homeotic genes throughout development. PcG proteins are not required to initiate repression, but to maintain it during later stages of development. They probably act via the methylation of histones, rendering chromatin heritably changed in its expressibility. Necessary but not sufficient to recruit a functional PcG repressive complex that represses target genes, suggesting that the recruitment of the distinct PRC1 complex is also required to allow a subsequent repression. The chain is Polycomb protein Sfmbt from Drosophila melanogaster (Fruit fly).